The chain runs to 197 residues: MSLSIDVTSLPSISSSIFKNESSSTTSTLSGKSIGRSEQYISPDAEAFNKYMLSKSPEDIGPSDSASNDPLTSFSIRSNAVKTNADAGVSMDSSTQSRSSSNVGCDQLDFSLTKGINVNANLESCISISTDHKKEKSKKDKSRKHYPRIEADSDSEDYILDDSDSDDGKCKNCKYKKKYFALRMRMKRVAMQLIEDL.

Positions 17–30 (IFKNESSSTTSTLS) are enriched in low complexity. Disordered regions lie at residues 17-37 (IFKN…IGRS) and 53-72 (LSKS…DPLT). The residue at position 67 (Ser67) is a Phosphoserine; by host CK1. Residue Asp92 coordinates Mg(2+). A disordered region spans residues 130-157 (TDHKKEKSKKDKSRKHYPRIEADSDSED). Ser153, Ser155, Ser163, and Ser165 each carry phosphoserine; by host.

It belongs to the rotavirus NSP5 family. As to quaternary structure, homodimer. Interacts with VP1. Interacts with VP2. Interacts with NSP2; this interaction leads to up-regulation of NSP5 hyperphosphorylation and formation of virus factories. Interacts with NSP6. Participates in the selective exclusion of host proteins from stress granules (SG) and P bodies (PB). Also participates in the sequestration of these remodeled organelles in viral factories. Mg(2+) serves as cofactor. In terms of processing, O-glycosylated. Hyperphosphorylated on serine residues, when in dimeric form. Phosphorylation by host CK1 is required for the hyperphosphorylation of NSP5 dimer.

Its subcellular location is the host cytoplasm. Plays an essential role in the viral genome replication. Participates, together with NSP2, in the formation of viral factories (viroplasms), which are large inclusions in the host cytoplasm where replication intermediates are assembled and viral RNA replication takes place. Orchestrates the recruitment of viroplasmic proteins such as capsid proteins to these factories. Participates in the selective exclusion of host proteins from stress granules (SG) and P bodies (PB). Also participates in the sequestration of these remodeled organelles in viral factories. The protein is Non-structural protein 5 of Homo sapiens (Human).